The chain runs to 186 residues: Translation initiation factor IF-3 (186 aa).

The protein belongs to the IF-3 family. Monomer.

It localises to the cytoplasm. IF-3 binds to the 30S ribosomal subunit and shifts the equilibrium between 70S ribosomes and their 50S and 30S subunits in favor of the free subunits, thus enhancing the availability of 30S subunits on which protein synthesis initiation begins. This Borrelia garinii subsp. bavariensis (strain ATCC BAA-2496 / DSM 23469 / PBi) (Borreliella bavariensis) protein is Translation initiation factor IF-3.